Consider the following 247-residue polypeptide: 7-carboxy-7-deazaguanine synthase (247 aa).

Substrate-binding positions include 15–17 (IQG) and arginine 30. The 227-residue stretch at 21–247 (LVGRRQIFVR…PQMHRALGLR (227 aa)) folds into the Radical SAM core domain. 3 residues coordinate [4Fe-4S] cluster: cysteine 34, cysteine 38, and cysteine 41. Residue threonine 43 coordinates Mg(2+). Residue threonine 78 participates in substrate binding. Residue glycine 80 participates in S-adenosyl-L-methionine binding.

This sequence belongs to the radical SAM superfamily. 7-carboxy-7-deazaguanine synthase family. As to quaternary structure, homodimer. It depends on [4Fe-4S] cluster as a cofactor. The cofactor is S-adenosyl-L-methionine. Mg(2+) serves as cofactor.

The catalysed reaction is 6-carboxy-5,6,7,8-tetrahydropterin + H(+) = 7-carboxy-7-deazaguanine + NH4(+). Its pathway is purine metabolism; 7-cyano-7-deazaguanine biosynthesis. Its function is as follows. Catalyzes the complex heterocyclic radical-mediated conversion of 6-carboxy-5,6,7,8-tetrahydropterin (CPH4) to 7-carboxy-7-deazaguanine (CDG), a step common to the biosynthetic pathways of all 7-deazapurine-containing compounds. In Methanothermobacter thermautotrophicus (strain ATCC 29096 / DSM 1053 / JCM 10044 / NBRC 100330 / Delta H) (Methanobacterium thermoautotrophicum), this protein is 7-carboxy-7-deazaguanine synthase.